The chain runs to 110 residues: Small ubiquitin-related modifier 3 (110 aa).

Residues K5 and K7 each participate in a glycyl lysine isopeptide (Lys-Gly) (interchain with G-Cter in SUMO2) cross-link. A Glycyl lysine isopeptide (Lys-Gly) (interchain with G-Cter in SUMO); alternate cross-link involves residue K11. K11 is covalently cross-linked (Glycyl lysine isopeptide (Lys-Gly) (interchain with G-Cter in SUMO2); alternate). The Ubiquitin-like domain maps to 15 to 92 (DHINLKVAGQ…IDVFQQQTGG (78 aa)). Positions 89–101 (QTGGTASRASVPT) are enriched in polar residues. Residues 89–110 (QTGGTASRASVPTPSHFPDICY) are disordered. G92 is covalently cross-linked (Glycyl lysine isopeptide (Gly-Lys) (interchain with K-? in acceptor proteins)). A propeptide spanning residues 93–110 (TASRASVPTPSHFPDICY) is cleaved from the precursor.

Belongs to the ubiquitin family. SUMO subfamily. Interacts with SAE2 and UBE2I. Covalently attached to a number of proteins. Interacts with USP25 (via ts SIM domain); the interaction sumoylates USP25 and inhibits its ubiquitin hydrolyzing activity. Interacts with BMAL1. Post-translationally, polymeric chains can be formed through Lys-11 cross-linking. In terms of processing, cleavage of precursor form by SENP1, SENP2 or SENP5 is necessary for function.

Its subcellular location is the cytoplasm. It localises to the nucleus. The protein localises to the PML body. Ubiquitin-like protein which can be covalently attached to target lysines either as a monomer or as a lysine-linked polymer. Does not seem to be involved in protein degradation and may function as an antagonist of ubiquitin in the degradation process. Plays a role in a number of cellular processes such as nuclear transport, DNA replication and repair, mitosis and signal transduction. Covalent attachment to its substrates requires prior activation by the E1 complex SAE1-SAE2 and linkage to the E2 enzyme UBE2I, and can be promoted by an E3 ligase such as PIAS1-4, RANBP2 or CBX4. Plays a role in the regulation of sumoylation status of SETX. The sequence is that of Small ubiquitin-related modifier 3 (Sumo3) from Rattus norvegicus (Rat).